We begin with the raw amino-acid sequence, 61 residues long: Small ribosomal subunit protein uS14 (61 aa).

Residues Cys-24, Cys-27, Cys-40, and Cys-43 each coordinate Zn(2+).

Belongs to the universal ribosomal protein uS14 family. Zinc-binding uS14 subfamily. Part of the 30S ribosomal subunit. Contacts proteins S3 and S10. The cofactor is Zn(2+).

Functionally, binds 16S rRNA, required for the assembly of 30S particles and may also be responsible for determining the conformation of the 16S rRNA at the A site. The sequence is that of Small ribosomal subunit protein uS14 from Mycobacterium avium (strain 104).